The chain runs to 273 residues: Dermonecrotic toxin LhSicTox-alphaIA2aii (273 aa).

His5 is a catalytic residue. Mg(2+)-binding residues include Glu25 and Asp27. The Nucleophile role is filled by His41. Cystine bridges form between Cys45-Cys51 and Cys47-Cys190. Residue Asp85 coordinates Mg(2+).

Belongs to the arthropod phospholipase D family. Class II subfamily. The cofactor is Mg(2+). Expressed by the venom gland.

The protein resides in the secreted. The enzyme catalyses an N-(acyl)-sphingosylphosphocholine = an N-(acyl)-sphingosyl-1,3-cyclic phosphate + choline. It catalyses the reaction an N-(acyl)-sphingosylphosphoethanolamine = an N-(acyl)-sphingosyl-1,3-cyclic phosphate + ethanolamine. The catalysed reaction is a 1-acyl-sn-glycero-3-phosphocholine = a 1-acyl-sn-glycero-2,3-cyclic phosphate + choline. It carries out the reaction a 1-acyl-sn-glycero-3-phosphoethanolamine = a 1-acyl-sn-glycero-2,3-cyclic phosphate + ethanolamine. In terms of biological role, dermonecrotic toxins cleave the phosphodiester linkage between the phosphate and headgroup of certain phospholipids (sphingolipid and lysolipid substrates), forming an alcohol (often choline) and a cyclic phosphate. This toxin acts on sphingomyelin (SM). It may also act on ceramide phosphoethanolamine (CPE), lysophosphatidylcholine (LPC) and lysophosphatidylethanolamine (LPE), but not on lysophosphatidylserine (LPS), and lysophosphatidylglycerol (LPG). It acts by transphosphatidylation, releasing exclusively cyclic phosphate products as second products. Induces dermonecrosis, hemolysis, increased vascular permeability, edema, inflammatory response, and platelet aggregation. This chain is Dermonecrotic toxin LhSicTox-alphaIA2aii, found in Loxosceles hirsuta (Recluse spider).